The sequence spans 313 residues: Ribosomal RNA small subunit methyltransferase H (313 aa).

S-adenosyl-L-methionine is bound by residues 33-35, E52, F80, D101, and Q108; that span reads AGH.

The protein belongs to the methyltransferase superfamily. RsmH family.

The protein resides in the cytoplasm. It carries out the reaction cytidine(1402) in 16S rRNA + S-adenosyl-L-methionine = N(4)-methylcytidine(1402) in 16S rRNA + S-adenosyl-L-homocysteine + H(+). Its function is as follows. Specifically methylates the N4 position of cytidine in position 1402 (C1402) of 16S rRNA. The polypeptide is Ribosomal RNA small subunit methyltransferase H (Spiroplasma kunkelii).